The sequence spans 396 residues: Elongation factor Tu (396 aa).

The region spanning lysine 10–threonine 206 is the tr-type G domain. Positions glycine 19–threonine 26 are G1. Glycine 19–threonine 26 serves as a coordination point for GTP. Threonine 26 lines the Mg(2+) pocket. Positions glycine 60–serine 64 are G2. Positions aspartate 81 to glycine 84 are G3. GTP contacts are provided by residues aspartate 81–histidine 85 and asparagine 136–aspartate 139. The segment at asparagine 136–aspartate 139 is G4. The segment at serine 174 to arginine 176 is G5.

It belongs to the TRAFAC class translation factor GTPase superfamily. Classic translation factor GTPase family. EF-Tu/EF-1A subfamily. Monomer.

The protein localises to the cytoplasm. It carries out the reaction GTP + H2O = GDP + phosphate + H(+). Its function is as follows. GTP hydrolase that promotes the GTP-dependent binding of aminoacyl-tRNA to the A-site of ribosomes during protein biosynthesis. The chain is Elongation factor Tu from Xanthomonas oryzae pv. oryzae (strain MAFF 311018).